Here is a 187-residue protein sequence, read N- to C-terminus: Adenylate kinase (187 aa).

11–16 (GAGKGT) provides a ligand contact to ATP. An NMP region spans residues 31 to 60 (STGDILREAVKNQTAMGIEAKRYMDAGDLV). AMP contacts are provided by residues T32, R37, 58-60 (DLV), 86-89 (GFPR), and Q93. Positions 127 to 137 (GRAEIEGRADD) are LID. An ATP-binding site is contributed by R128. R134 and R145 together coordinate AMP. ATP is bound at residue G173.

The protein belongs to the adenylate kinase family. In terms of assembly, monomer.

It is found in the cytoplasm. The enzyme catalyses AMP + ATP = 2 ADP. The protein operates within purine metabolism; AMP biosynthesis via salvage pathway; AMP from ADP: step 1/1. Functionally, catalyzes the reversible transfer of the terminal phosphate group between ATP and AMP. Plays an important role in cellular energy homeostasis and in adenine nucleotide metabolism. The protein is Adenylate kinase of Leptospira interrogans serogroup Icterohaemorrhagiae serovar copenhageni (strain Fiocruz L1-130).